The chain runs to 472 residues: GTPase Der (472 aa).

EngA-type G domains are found at residues 3–166 (AVIA…PPAE) and 178–351 (IPVA…AAAH). Residues 9–16 (GRPNVGKS), 56–60 (DTGGM), 118–121 (NKTD), 184–191 (GRPNVGKS), 231–235 (DTAGV), and 296–299 (NKWD) each bind GTP. The KH-like domain occupies 352–436 (RDLATPELND…PVRIECRASD (85 aa)). Residues 434–472 (ASDNPFADKPNQLTERQRRRRQRVIHHAKKREKKRKRRR) are disordered. Residues 450-472 (QRRRRQRVIHHAKKREKKRKRRR) are compositionally biased toward basic residues.

This sequence belongs to the TRAFAC class TrmE-Era-EngA-EngB-Septin-like GTPase superfamily. EngA (Der) GTPase family. Associates with the 50S ribosomal subunit.

In terms of biological role, GTPase that plays an essential role in the late steps of ribosome biogenesis. The chain is GTPase Der from Halorhodospira halophila (strain DSM 244 / SL1) (Ectothiorhodospira halophila (strain DSM 244 / SL1)).